Reading from the N-terminus, the 219-residue chain is Casein kinase II subunit beta' (219 aa).

Position 2 is a phosphothreonine; by autocatalysis (T2).

It belongs to the casein kinase 2 subunit beta family. In terms of assembly, tetramer of two alpha and two beta' subunits. In terms of processing, phosphorylated by alpha subunit.

In terms of biological role, participates in Wnt signaling. Plays a complex role in regulating the basal catalytic activity of the alpha subunit. This chain is Casein kinase II subunit beta' (CkIIbeta2), found in Drosophila melanogaster (Fruit fly).